Consider the following 82-residue polypeptide: Protein ImpC (82 aa).

This sequence belongs to the DinI family.

In terms of biological role, the imp operon is involved in UV protection and mutation, however the ImpC protein is not essential for these functions. In Salmonella typhimurium, this protein is Protein ImpC (impC).